A 758-amino-acid chain; its full sequence is Xaa-Pro dipeptidyl-peptidase (758 aa).

Residues Ser349, Asp469, and His499 each act as charge relay system in the active site.

The protein belongs to the peptidase S15 family. As to quaternary structure, homodimer.

It is found in the cytoplasm. The catalysed reaction is Hydrolyzes Xaa-Pro-|- bonds to release unblocked, N-terminal dipeptides from substrates including Ala-Pro-|-p-nitroanilide and (sequentially) Tyr-Pro-|-Phe-Pro-|-Gly-Pro-|-Ile.. Functionally, removes N-terminal dipeptides sequentially from polypeptides having unsubstituted N-termini provided that the penultimate residue is proline. This Streptococcus uberis (strain ATCC BAA-854 / 0140J) protein is Xaa-Pro dipeptidyl-peptidase.